The primary structure comprises 240 residues: (DL)-glycerol-3-phosphatase 2 (240 aa).

Aspartate 20 functions as the Nucleophile in the catalytic mechanism. Mg(2+)-binding residues include aspartate 20, aspartate 22, and aspartate 185. Aspartate 22 serves as the catalytic Proton donor.

The protein belongs to the HAD-like hydrolase superfamily. DOG/GPP family. Mg(2+) is required as a cofactor. Ubiquitous with highest expression in siliques. Mainly restricted to the meristem of immature flower and vascular elements of the root, shoot, leave, siliqua and developing embryo (at the protein level).

It localises to the cytoplasm. The catalysed reaction is sn-glycerol 1-phosphate + H2O = glycerol + phosphate. It carries out the reaction sn-glycerol 3-phosphate + H2O = glycerol + phosphate. Functionally, acts as a glycerol-3-phosphatase with higher stereospecificity for L-glycerol-3-phosphate than DL-glycerol-3-phosphate. This chain is (DL)-glycerol-3-phosphatase 2 (GPP2), found in Arabidopsis thaliana (Mouse-ear cress).